The primary structure comprises 656 residues: UvrABC system protein B (656 aa).

Residues 23 to 180 enclose the Helicase ATP-binding domain; the sequence is EGIKKGYRFQ…QHLAKIGYER (158 aa). ATP is bound at residue 36-43; the sequence is GVTGSGKT. The Beta-hairpin motif lies at 89–112; that stretch reads YYDYYQPEAYVPTKDLYIEKNADI. A Helicase C-terminal domain is found at 426-588; the sequence is QVDDLISEIK…ITPKTIVKPL (163 aa). In terms of domain architecture, UVR spans 614–649; the sequence is EEYLSLLEEEMYRAASELRYEDAAKLRDEIFRLREE.

Belongs to the UvrB family. Forms a heterotetramer with UvrA during the search for lesions. Interacts with UvrC in an incision complex.

The protein localises to the cytoplasm. Its function is as follows. The UvrABC repair system catalyzes the recognition and processing of DNA lesions. A damage recognition complex composed of 2 UvrA and 2 UvrB subunits scans DNA for abnormalities. Upon binding of the UvrA(2)B(2) complex to a putative damaged site, the DNA wraps around one UvrB monomer. DNA wrap is dependent on ATP binding by UvrB and probably causes local melting of the DNA helix, facilitating insertion of UvrB beta-hairpin between the DNA strands. Then UvrB probes one DNA strand for the presence of a lesion. If a lesion is found the UvrA subunits dissociate and the UvrB-DNA preincision complex is formed. This complex is subsequently bound by UvrC and the second UvrB is released. If no lesion is found, the DNA wraps around the other UvrB subunit that will check the other stand for damage. The protein is UvrABC system protein B of Pseudothermotoga lettingae (strain ATCC BAA-301 / DSM 14385 / NBRC 107922 / TMO) (Thermotoga lettingae).